The primary structure comprises 143 residues: Hemoglobin anodic subunit alpha (143 aa).

Serine 2 is modified (N-acetylserine). The region spanning 2–143 (SLSAKDMAVV…FTLALSERYR (142 aa)) is the Globin domain. Histidine 60 is an O2 binding site. Histidine 89 is a heme b binding site.

This sequence belongs to the globin family. As to quaternary structure, heterotetramer of two alpha chains and two beta chains. As to expression, red blood cells.

Functionally, involved in oxygen transport from gills to the various peripheral tissues. The polypeptide is Hemoglobin anodic subunit alpha (hba) (Anguilla anguilla (European freshwater eel)).